A 240-amino-acid chain; its full sequence is Large ribosomal subunit protein uL2 (240 aa).

Residues D199–E240 are disordered. Residues A221–S231 show a composition bias toward basic and acidic residues.

Belongs to the universal ribosomal protein uL2 family. Part of the 50S ribosomal subunit. Forms a bridge to the 30S subunit in the 70S ribosome.

One of the primary rRNA binding proteins. Required for association of the 30S and 50S subunits to form the 70S ribosome, for tRNA binding and peptide bond formation. It has been suggested to have peptidyltransferase activity; this is somewhat controversial. Makes several contacts with the 16S rRNA in the 70S ribosome. The sequence is that of Large ribosomal subunit protein uL2 from Halobacterium salinarum (strain ATCC 29341 / DSM 671 / R1).